Here is a 274-residue protein sequence, read N- to C-terminus: Phosphatidylglycerol--prolipoprotein diacylglyceryl transferase (274 aa).

The next 4 membrane-spanning stretches (helical) occupy residues 16–36, 62–82, 94–114, and 129–149; these read VGLH…LSSF, FALG…VLFY, IIKI…LVIW, and LSVT…ALLI. Arg150 contributes to the a 1,2-diacyl-sn-glycero-3-phospho-(1'-sn-glycerol) binding site. 3 helical membrane passes run 184–204, 213–233, and 247–267; these read VQLY…WLCY, GYSA…AEFF, and LTIG…ILWI.

It belongs to the Lgt family.

The protein resides in the cell inner membrane. It catalyses the reaction L-cysteinyl-[prolipoprotein] + a 1,2-diacyl-sn-glycero-3-phospho-(1'-sn-glycerol) = an S-1,2-diacyl-sn-glyceryl-L-cysteinyl-[prolipoprotein] + sn-glycerol 1-phosphate + H(+). It functions in the pathway protein modification; lipoprotein biosynthesis (diacylglyceryl transfer). In terms of biological role, catalyzes the transfer of the diacylglyceryl group from phosphatidylglycerol to the sulfhydryl group of the N-terminal cysteine of a prolipoprotein, the first step in the formation of mature lipoproteins. The sequence is that of Phosphatidylglycerol--prolipoprotein diacylglyceryl transferase from Chlamydia muridarum (strain MoPn / Nigg).